Here is a 149-residue protein sequence, read N- to C-terminus: Probable calcium-binding protein CML25/26 (149 aa).

EF-hand domains follow at residues 1–35 (MASSASSVFAAFDKDGDGKVSASELRGCMAAALGE), 37–72 (VSEEEAAAILATADTDGDGLLDHHEFMRLSAAHQLQ), 77–113 (ESLRCLREAFDMYAEEEETAVITPASLRRMLRRLGSE), and 117–149 (LEMEECRAMICRFDLNGDGVLSFDEFRVMMLMA). Positions 13, 15, 17, 19, 24, 50, 52, 54, and 61 each coordinate Ca(2+). Asp130, Asn132, Asp134, and Glu141 together coordinate Ca(2+).

Functionally, potential calcium sensor. In Oryza sativa subsp. japonica (Rice), this protein is Probable calcium-binding protein CML25/26 (CML25).